The chain runs to 310 residues: Olfactory receptor 8G3 (310 aa).

The Extracellular portion of the chain corresponds to 1–25 (MDPGNHSSVTESILAGLSEQPELQL). Asn5 carries N-linked (GlcNAc...) asparagine glycosylation. Residues 26–46 (RLFLLFLGICVVTVVGNLGMI) form a helical membrane-spanning segment. Residues 47-54 (TLIGLSSH) are Cytoplasmic-facing. The helical transmembrane segment at 55 to 75 (LHTPMYYFLSSLSFIDFCHST) threads the bilayer. The Extracellular portion of the chain corresponds to 76-99 (VITPKMLVNFATEKNIISYPECMA). An intrachain disulfide couples Cys97 to Cys189. Residues 100–120 (QLYLFSIFAIAECHMLAAMAY) form a helical membrane-spanning segment. Residues 121–139 (DCYVAICSPLLYNVIMSYH) are Cytoplasmic-facing. A helical membrane pass occupies residues 140–160 (HCFWLTVGVYILGILGSTIHT). Residues 161–197 (SFMLRLFLCKTNVINHYFCDLFPLLGLSCSSTYINEL) lie on the Extracellular side of the membrane. The chain crosses the membrane as a helical span at residues 198–217 (LVLVLSAFNILMPALTILAS). The Cytoplasmic segment spans residues 218–237 (YIFIIASILRIHSTEGRSKA). A helical membrane pass occupies residues 238-258 (FSTCSSHILAVAVFFGSAAFM). The Extracellular segment spans residues 259–271 (YLQPSSVSSMDQR). A helical transmembrane segment spans residues 272 to 292 (KVSSVFYTTIVPMLNPLIYSL). Residues 293-310 (RNKDVKLAVKKILHQTAC) are Cytoplasmic-facing.

This sequence belongs to the G-protein coupled receptor 1 family.

The protein resides in the cell membrane. Functionally, odorant receptor. The sequence is that of Olfactory receptor 8G3 from Homo sapiens (Human).